A 277-amino-acid chain; its full sequence is Large ribosomal subunit protein uL2 (277 aa).

2 disordered regions span residues 32–58 (KSLT…RGGG) and 225–277 (VAMN…RRNN).

This sequence belongs to the universal ribosomal protein uL2 family. As to quaternary structure, part of the 50S ribosomal subunit. Forms a bridge to the 30S subunit in the 70S ribosome.

In terms of biological role, one of the primary rRNA binding proteins. Required for association of the 30S and 50S subunits to form the 70S ribosome, for tRNA binding and peptide bond formation. It has been suggested to have peptidyltransferase activity; this is somewhat controversial. Makes several contacts with the 16S rRNA in the 70S ribosome. This is Large ribosomal subunit protein uL2 from Borrelia duttonii (strain Ly).